Reading from the N-terminus, the 425-residue chain is G protein-activated inward rectifier potassium channel 2 (425 aa).

Over methionine 1–tryptophan 91 the chain is Cytoplasmic. A phosphoserine mark is found at serine 18 and serine 25. Residues arginine 92–isoleucine 116 form a helical membrane-spanning segment. Over alanine 117–glycine 140 the chain is Extracellular. The segment at residues phenylalanine 141–glutamate 152 is an intramembrane region (helical; Pore-forming). An intramembrane region (pore-forming) is located at residues threonine 153–tyrosine 159. The Selectivity filter signature appears at threonine 154 to tyrosine 159. The Extracellular segment spans residues arginine 160–glutamate 168. Residues glycine 169–cysteine 190 traverse the membrane as a helical segment. The Cytoplasmic portion of the chain corresponds to methionine 191–valine 425. The tract at residues asparagine 392 to valine 425 is disordered. The PDZ-binding signature appears at glutamate 422–valine 425.

It belongs to the inward rectifier-type potassium channel (TC 1.A.2.1) family. KCNJ6 subfamily. In terms of assembly, associates with KCNJ3/GIRK1 or KCNJ5/GRIK4 to form a G-protein-activated heteromultimer pore-forming unit. The resulting inward current is much larger. Interacts (via PDZ-binding motif) with SNX27 (via PDZ domain); the interaction is required when endocytosed to prevent degradation in lysosomes and promote recycling to the plasma membrane. Expressed in insulin-secreting cells and brain.

It localises to the membrane. It carries out the reaction K(+)(in) = K(+)(out). With respect to regulation, activated by phosphatidylinositol 4,5 biphosphate (PtdIns(4,5)P2). Inward rectifier potassium channels are characterized by a greater tendency to allow potassium to flow into the cell rather than out of it. Their voltage dependence is regulated by the concentration of extracellular potassium; as external potassium is raised, the voltage range of the channel opening shifts to more positive voltages. The inward rectification is mainly due to the blockage of outward current by internal magnesium. This potassium channel may be involved in the regulation of insulin secretion by glucose and/or neurotransmitters acting through G-protein-coupled receptors. This Mesocricetus auratus (Golden hamster) protein is G protein-activated inward rectifier potassium channel 2 (KCNJ6).